A 269-amino-acid polypeptide reads, in one-letter code: Malonyl-[acyl-carrier protein] O-methyltransferase (269 aa).

It belongs to the methyltransferase superfamily.

It catalyses the reaction malonyl-[ACP] + S-adenosyl-L-methionine = malonyl-[ACP] methyl ester + S-adenosyl-L-homocysteine. It functions in the pathway cofactor biosynthesis; biotin biosynthesis. In terms of biological role, converts the free carboxyl group of a malonyl-thioester to its methyl ester by transfer of a methyl group from S-adenosyl-L-methionine (SAM). It allows to synthesize pimeloyl-ACP via the fatty acid synthetic pathway. The polypeptide is Malonyl-[acyl-carrier protein] O-methyltransferase (Bacillus anthracis).